The chain runs to 206 residues: MFIKVNTKYFIDQYALQAQNQKLRSRSWFKLQSIDRLDKLLKQGMTVIDLGSTPGGWSSYVIKQISNLGTIVSCDILPMKKIAGVKFLQGDCSNINFLNEIDLKIKHKRAQVVLSDMSPNTTGISTVDVCKSIYLGKIALNMCCRFLAPGGSFLVKIFQGDGFDQYLYNLKCLFHKVKVRKPSSSRSHSREVYIVSKDFKYKRINI.

Positions 55, 57, 75, 91, and 116 each coordinate S-adenosyl-L-methionine. Lysine 156 (proton acceptor) is an active-site residue.

Belongs to the class I-like SAM-binding methyltransferase superfamily. RNA methyltransferase RlmE family.

The protein localises to the cytoplasm. It catalyses the reaction uridine(2552) in 23S rRNA + S-adenosyl-L-methionine = 2'-O-methyluridine(2552) in 23S rRNA + S-adenosyl-L-homocysteine + H(+). Its function is as follows. Specifically methylates the uridine in position 2552 of 23S rRNA at the 2'-O position of the ribose in the fully assembled 50S ribosomal subunit. In Blochmanniella floridana, this protein is Ribosomal RNA large subunit methyltransferase E.